A 445-amino-acid chain; its full sequence is DNA primase DnaG (445 aa).

A Toprim domain is found at 166–252 (DAIVVVEGRS…SVEDLSRSEV (87 aa)). Residues Glu-172, Asp-214, and Asp-216 each coordinate Mg(2+). The segment at 276-355 (EEMSQAGEST…NGDGPTIPSL (80 aa)) is disordered. Residues 284–298 (STTADGGAVAAATSD) show a composition bias toward low complexity. Polar residues predominate over residues 303–313 (NQPSPSSQTGS). Over residues 324-337 (SVVDNSNATAVADA) the composition is skewed to low complexity.

It belongs to the archaeal DnaG primase family. In terms of assembly, forms a ternary complex with MCM helicase and DNA. It depends on Mg(2+) as a cofactor.

The enzyme catalyses ssDNA + n NTP = ssDNA/pppN(pN)n-1 hybrid + (n-1) diphosphate.. Its function is as follows. RNA polymerase that catalyzes the synthesis of short RNA molecules used as primers for DNA polymerase during DNA replication. This Haloarcula marismortui (strain ATCC 43049 / DSM 3752 / JCM 8966 / VKM B-1809) (Halobacterium marismortui) protein is DNA primase DnaG.